The sequence spans 790 residues: LPS-assembly protein LptD (790 aa).

Positions Met-1 to Ala-20 are cleaved as a signal peptide.

This sequence belongs to the LptD family. Component of the lipopolysaccharide transport and assembly complex. Interacts with LptE and LptA.

It is found in the cell outer membrane. Its function is as follows. Together with LptE, is involved in the assembly of lipopolysaccharide (LPS) at the surface of the outer membrane. This Bordetella bronchiseptica (strain ATCC BAA-588 / NCTC 13252 / RB50) (Alcaligenes bronchisepticus) protein is LPS-assembly protein LptD.